Reading from the N-terminus, the 91-residue chain is Acylphosphatase (91 aa).

The 89-residue stretch at 3–91 folds into the Acylphosphatase-like domain; sequence HIKVNVKGQV…TELTKFEVKY (89 aa). Catalysis depends on residues Arg-18 and Asn-36.

Belongs to the acylphosphatase family.

The catalysed reaction is an acyl phosphate + H2O = a carboxylate + phosphate + H(+). The sequence is that of Acylphosphatase (acyP) from Oceanobacillus iheyensis (strain DSM 14371 / CIP 107618 / JCM 11309 / KCTC 3954 / HTE831).